Consider the following 163-residue polypeptide: Single-stranded DNA-binding protein 1 (163 aa).

Residues 1–104 (MINNVVLVGR…VVAESFQLLE (104 aa)) form the SSB domain. A disordered region spans residues 106–163 (RATREGGSPNSYNNGGYNNAPSNNSYSASSQQTPNFSRDESPFGNSNPMDISDDDLPF). Over residues 111-135 (GGSPNSYNNGGYNNAPSNNSYSASS) the composition is skewed to low complexity. The Important for interaction with partner proteins motif lies at 158–163 (DDDLPF).

As to quaternary structure, homotetramer.

Plays an important role in DNA replication, recombination and repair. Binds to ssDNA and to an array of partner proteins to recruit them to their sites of action during DNA metabolism. The protein is Single-stranded DNA-binding protein 1 (ssb1) of Streptococcus agalactiae serotype III (strain NEM316).